The sequence spans 150 residues: Large ribosomal subunit protein uL15 (150 aa).

This sequence belongs to the universal ribosomal protein uL15 family. In terms of assembly, part of the 50S ribosomal subunit.

Its function is as follows. Binds to the 23S rRNA. The chain is Large ribosomal subunit protein uL15 from Anaplasma marginale (strain Florida).